The sequence spans 320 residues: Protein MRG1 (320 aa).

Positions 1-28 (MGSSSKEETASDGDTASGGASPSNDGRL) are disordered. The span at 12–24 (DGDTASGGASPSN) shows a compositional bias: polar residues. The region spanning 30–80 (SEGERVLAYHGPRVYGAKVQKVELRKKEWKYFVHYLGWNKNWDEWVSADRL) is the Tudor-knot domain. The segment covering 93-104 (ALDKKQGVEKGT) has biased composition (basic and acidic residues). A disordered region spans residues 93–147 (ALDKKQGVEKGTKSGRSAQTKTRSSADTKADKDDTKTNAAKGKKRKHESGNEKDN). A compositionally biased stretch (polar residues) spans 106-115 (SGRSAQTKTR). Residues 116 to 128 (SSADTKADKDDTK) show a composition bias toward basic and acidic residues. Residues 150 to 318 (AEKLMKIQIP…KVSDGKGKGK (169 aa)) enclose the MRG domain.

As to quaternary structure, interacts with HAM1 and HAM2. Interacts (via MRG domain) with CO. Component of the NuA4 histone acetyltransferase complex. As to expression, ubiquitous. Mainly expressed in the vasculature of cotyledons and leaves, and in roots and inflorescences.

Its subcellular location is the nucleus. Functionally, chromatin remodeling factor. Acts as a 'reader' protein by binding to H3K36me3 and H3K36me3 to control histone H4 acetylation. Increases the transcriptional levels of the flowering time genes FLC and FT. Binds the chromatin at the FT promoter upon interaction with CO. This chain is Protein MRG1, found in Arabidopsis thaliana (Mouse-ear cress).